Consider the following 77-residue polypeptide: Delta-conotoxin GmVIA (77 aa).

The first 22 residues, 1–22 (MKLTCMMIVAVLFLTAWTFVTA), serve as a signal peptide directing secretion. The propeptide occupies 23–48 (DDSGNGMEILFPKAGHEMENLEVSNR). 3 disulfides stabilise this stretch: Cys52/Cys67, Cys59/Cys72, and Cys66/Cys76.

This sequence belongs to the conotoxin O1 superfamily. As to expression, expressed by the venom duct.

The protein resides in the secreted. In terms of biological role, delta-conotoxins bind to site 6 of voltage-gated sodium channels (Nav) and inhibit the inactivation process. This toxin shows weak activity on rNav1.2/SCN2A (EC(50)=2.5 uM) and rNav1.4/SCN4A (EC(50)=4.8 uM). In vivo, injection of this peptide in the head region of garden snail induces retraction of the head and body into shell. This is followed by secretion of viscous green slime and a convulsive undulation into and out of the shell. No apparent biological activity was observed when a much greater dose of peptide was injected intraperitoneally into mice. The polypeptide is Delta-conotoxin GmVIA (Conus gloriamaris (Glory-of-the-Sea cone)).